We begin with the raw amino-acid sequence, 299 residues long: Protease HtpX homolog (299 aa).

The next 2 helical transmembrane spans lie at 14–34 (WLLLLVFFLLLGLVGYGVGYL) and 39–59 (GFGGMILALVIGFIYAVTMIF). Residue histidine 143 coordinates Zn(2+). Glutamate 144 is an active-site residue. Residue histidine 147 participates in Zn(2+) binding. Helical transmembrane passes span 153–173 (IRISTIAVALASAITMLAVMA) and 198–218 (IILLIISLIAIILAPLAATLV). Residue glutamate 227 participates in Zn(2+) binding.

The protein belongs to the peptidase M48B family. The cofactor is Zn(2+).

It is found in the cell membrane. This Streptococcus thermophilus (strain CNRZ 1066) protein is Protease HtpX homolog.